We begin with the raw amino-acid sequence, 372 residues long: tRNA-specific 2-thiouridylase MnmA (372 aa).

ATP is bound by residues 11–18 (GMSGGVDS) and Met37. The interaction with target base in tRNA stretch occupies residues 97 to 99 (NPD). Residue Cys102 is the Nucleophile of the active site. Cys102 and Cys199 form a disulfide bridge. Gly126 contacts ATP. Residues 149–151 (KDQ) form an interaction with tRNA region. Cys199 functions as the Cysteine persulfide intermediate in the catalytic mechanism. An interaction with tRNA region spans residues 309–310 (RY).

This sequence belongs to the MnmA/TRMU family.

The protein localises to the cytoplasm. It carries out the reaction S-sulfanyl-L-cysteinyl-[protein] + uridine(34) in tRNA + AH2 + ATP = 2-thiouridine(34) in tRNA + L-cysteinyl-[protein] + A + AMP + diphosphate + H(+). Its function is as follows. Catalyzes the 2-thiolation of uridine at the wobble position (U34) of tRNA, leading to the formation of s(2)U34. In Staphylococcus epidermidis (strain ATCC 35984 / DSM 28319 / BCRC 17069 / CCUG 31568 / BM 3577 / RP62A), this protein is tRNA-specific 2-thiouridylase MnmA.